Reading from the N-terminus, the 216-residue chain is ATP synthase subunit C lysine N-methyltransferase (216 aa).

Met-1 bears the N-acetylmethionine mark. The span at 1 to 12 shows a compositional bias: basic and acidic residues; it reads MERGETPEEERQ. The disordered stretch occupies residues 1–25; it reads MERGETPEEERQSGCVLPTSPESDS. The helical transmembrane segment at 31–50 threads the bilayer; the sequence is WGFLITGVIGGALVTVYAVT. The segment at 51–85 is required for mitochondrial location; that stretch reads TPFIAPALRKVCLPFVPATSRQVENVVKMLQHRRG.

Belongs to the ANT/ATPSC lysine N-methyltransferase family.

The protein resides in the mitochondrion membrane. The catalysed reaction is L-lysyl-[protein] + 3 S-adenosyl-L-methionine = N(6),N(6),N(6)-trimethyl-L-lysyl-[protein] + 3 S-adenosyl-L-homocysteine + 3 H(+). In terms of biological role, mitochondrial protein-lysine N-methyltransferase that trimethylates ATP synthase subunit C, ATP5MC1 and ATP5MC2. Trimethylation is required for proper incorporation of the C subunit into the ATP synthase complex and mitochondrial respiration. Promotes chronic pain. Involved in persistent inflammatory and neuropathic pain: methyltransferase activity in the mitochondria of sensory neurons promotes chronic pain via a pathway that depends on the production of reactive oxygen species (ROS) and on the engagement of spinal cord microglia. This is ATP synthase subunit C lysine N-methyltransferase (Atpsckmt) from Rattus norvegicus (Rat).